The primary structure comprises 56 residues: Small ribosomal subunit protein uS14 (56 aa).

4 residues coordinate Zn(2+): Cys21, Cys24, Cys39, and Cys42.

The protein belongs to the universal ribosomal protein uS14 family. In terms of assembly, component of the 40S small ribosomal subunit. It depends on Zn(2+) as a cofactor.

It localises to the cytoplasm. It is found in the cytosol. Its subcellular location is the rough endoplasmic reticulum. The chain is Small ribosomal subunit protein uS14 (RpS29) from Scarabaeus laticollis (Scarab dung beetle).